The sequence spans 83 residues: Small ribosomal subunit protein uS17 (83 aa).

The protein belongs to the universal ribosomal protein uS17 family. In terms of assembly, part of the 30S ribosomal subunit.

In terms of biological role, one of the primary rRNA binding proteins, it binds specifically to the 5'-end of 16S ribosomal RNA. The protein is Small ribosomal subunit protein uS17 of Nitratiruptor sp. (strain SB155-2).